The sequence spans 163 residues: NADH-quinone oxidoreductase subunit I (163 aa).

2 consecutive 4Fe-4S ferredoxin-type domains span residues 54-84 and 94-123; these read LRRY…IESD and TRYD…ETQI. Positions 64, 67, 70, 74, 103, 106, 109, and 113 each coordinate [4Fe-4S] cluster.

This sequence belongs to the complex I 23 kDa subunit family. In terms of assembly, NDH-1 is composed of 14 different subunits. Subunits NuoA, H, J, K, L, M, N constitute the membrane sector of the complex. The cofactor is [4Fe-4S] cluster.

It localises to the cell inner membrane. It carries out the reaction a quinone + NADH + 5 H(+)(in) = a quinol + NAD(+) + 4 H(+)(out). NDH-1 shuttles electrons from NADH, via FMN and iron-sulfur (Fe-S) centers, to quinones in the respiratory chain. The immediate electron acceptor for the enzyme in this species is believed to be ubiquinone. Couples the redox reaction to proton translocation (for every two electrons transferred, four hydrogen ions are translocated across the cytoplasmic membrane), and thus conserves the redox energy in a proton gradient. In Cupriavidus necator (strain ATCC 17699 / DSM 428 / KCTC 22496 / NCIMB 10442 / H16 / Stanier 337) (Ralstonia eutropha), this protein is NADH-quinone oxidoreductase subunit I.